We begin with the raw amino-acid sequence, 367 residues long: Teichoic acid glycerol-phosphate primase (367 aa).

This sequence belongs to the CDP-glycerol glycerophosphotransferase family.

Its subcellular location is the cell membrane. The enzyme catalyses N-acetyl-beta-D-mannosaminyl-(1-&gt;4)-N-acetyl-alpha-D-glucosaminyl di-trans,octa-cis-undecaprenyl diphosphate + CDP-glycerol = 4-O-[(2R)-glycerylphospho]-N-acetyl-beta-D-mannosaminyl-(1-&gt;4)-N-acetyl-alpha-D-glucosaminyl di-trans,octa-cis-undecaprenyl diphosphate + CMP + H(+). It participates in cell wall biogenesis; poly(ribitol phosphate) teichoic acid biosynthesis. Its function is as follows. Catalyzes the addition of a single glycerol phosphate residue to the prenoldiphosphate-linked disaccharide. The protein is Teichoic acid glycerol-phosphate primase (tarB) of Staphylococcus aureus (strain NCTC 8325 / PS 47).